We begin with the raw amino-acid sequence, 236 residues long: Small ribosomal subunit protein uS2c (236 aa).

It belongs to the universal ribosomal protein uS2 family.

The protein localises to the plastid. The protein resides in the chloroplast. The sequence is that of Small ribosomal subunit protein uS2c (rps2) from Lolium perenne (Perennial ryegrass).